Consider the following 1357-residue polypeptide: Vascular endothelial growth factor receptor 3 (1357 aa).

Positions 1–24 are cleaved as a signal peptide; sequence MKRDFTFFCRIWIGIPFFSGLVNG. Ig-like C2-type domains are found at residues 25-121, 138-244, 255-343, 352-442, 453-583, 583-690, and 699-785; these read FSMS…YYRC, IFVF…VQVI, PEDS…RELT, PFIS…LNFT, EKEA…TTIP, PEGF…HRKY, and PRYR…ATVS. Residues 25–796 lie on the Extracellular side of the membrane; that stretch reads FSMSPPTLDN…IGSDDKTNVE (772 aa). 5 N-linked (GlcNAc...) asparagine glycosylation sites follow: Asn44, Asn48, Asn114, Asn216, and Asn271. 2 disulfide bridges follow: Cys51-Cys121 and Cys173-Cys225. Cys272 and Cys331 are joined by a disulfide. N-linked (GlcNAc...) asparagine glycans are attached at residues Asn360, Asn400, and Asn440. Cystine bridges form between Cys473–Cys562, Cys493–Cys514, and Cys606–Cys674. Residues Asn553, Asn610, Asn660, Asn707, Asn711, and Asn751 are each glycosylated (N-linked (GlcNAc...) asparagine). A disulfide bridge connects residues Cys720 and Cys772. A helical transmembrane segment spans residues 797–817; it reads IVILIGTGVIAIFFWVLLLVI. Topologically, residues 818–1357 are cytoplasmic; it reads FCNVKRVNPA…DYFSSSDQAV (540 aa). Residues 866–1181 form the Protein kinase domain; it reads LRLGKVLGHG…ALVEILGDLL (316 aa). Residues 872–880 and Lys900 contribute to the ATP site; that span reads LGHGAFGKV. The interval 978–1007 is disordered; the sequence is QSQVRRMIEAGQASQSEHQPSTSSTNPPRV. Residues 989–1005 are compositionally biased toward polar residues; the sequence is QASQSEHQPSTSSTNPP. The active-site Proton acceptor is the Asp1045. Phosphotyrosine; by autocatalysis occurs at positions 1071 and 1076. The segment at 1192–1212 is disordered; the sequence is NVSQSSEDDGFSQASSRPPSQ. Tyr1226, Tyr1227, Tyr1334, and Tyr1338 each carry phosphotyrosine; by autocatalysis.

It belongs to the protein kinase superfamily. Tyr protein kinase family. CSF-1/PDGF receptor subfamily. Interacts with vegfc and vegfd. Monomer in the absence of bound vegfc or vegfd. Homodimer in the presence of bound vegfc or vegfd. In terms of processing, autophosphorylated on tyrosine residues upon ligand binding. Autophosphorylation occurs in trans, i.e. one subunit of the dimeric receptor phosphorylates tyrosine residues on the other subunit.

It localises to the cell membrane. The protein resides in the cytoplasm. The protein localises to the nucleus. The enzyme catalyses L-tyrosyl-[protein] + ATP = O-phospho-L-tyrosyl-[protein] + ADP + H(+). With respect to regulation, present in an inactive conformation in the absence of bound ligand. Binding of vegfc or vegfd leads to dimerization and activation by autophosphorylation on tyrosine residues. Tyrosine-protein kinase that acts as a cell-surface receptor for vegf or vegfc. Combinations of multiple VEGF receptors are required for development of different blood vessel types in the embryo. Involved in angiogenesis, specifically in VEGF-induced sprouting of new blood vessels, but not required for proper vasculogenesis or hematopoiesis. This is Vascular endothelial growth factor receptor 3 (flt4) from Danio rerio (Zebrafish).